A 113-amino-acid polypeptide reads, in one-letter code: UPF0482 protein YnfB (113 aa).

A signal peptide spans 1–28; that stretch reads MKITLSKRIGLLAFLLPCALALSTTVHA.

Belongs to the UPF0482 family.

In Shigella dysenteriae serotype 1 (strain Sd197), this protein is UPF0482 protein YnfB.